A 225-amino-acid chain; its full sequence is LexA repressor (225 aa).

A DNA-binding region (H-T-H motif) is located at residues Tyr-26 to Ser-46. Active-site for autocatalytic cleavage activity residues include Ser-146 and Lys-184.

This sequence belongs to the peptidase S24 family. As to quaternary structure, homodimer.

It carries out the reaction Hydrolysis of Ala-|-Gly bond in repressor LexA.. In terms of biological role, represses a number of genes involved in the response to DNA damage (SOS response), including recA and lexA. In the presence of single-stranded DNA, RecA interacts with LexA causing an autocatalytic cleavage which disrupts the DNA-binding part of LexA, leading to derepression of the SOS regulon and eventually DNA repair. The chain is LexA repressor from Pelagibacter ubique (strain HTCC1062).